A 687-amino-acid polypeptide reads, in one-letter code: Cytochrome b/c1 (687 aa).

A helical membrane pass occupies residues 46–66 (FGAILSFMLGMQILTGVILAM). 2 residues coordinate heme b: histidine 96 and histidine 110. The next 2 helical transmembrane spans lie at 126 to 146 (VLWI…FMGY) and 160 to 180 (VITN…TLLW). The heme b site is built by histidine 197 and histidine 211. 6 helical membrane passes run 199–219 (LLPF…HVAG), 247–267 (FGVA…PNYL), 305–325 (LAGV…PWLD), 337–357 (LAKQ…YLGA), 363–383 (IYVI…LIVL), and 410–430 (AVAS…GSLQ). The interval 404-434 (LAKGGKAVASVAIALVAAGALFLGSLQDARA) is internal signal sequence. The Cytochrome c domain maps to 458–643 (GALQRGLKVY…TVAQYSKDVT (186 aa)). Heme c is bound by residues cysteine 471, cysteine 474, histidine 475, and methionine 616. The helical transmembrane segment at 666–678 (VFLIIFAGLMYFT) threads the bilayer.

Belongs to the cytochrome b family. The main subunits of complex b-c1 are: cytochrome b, cytochrome c1 and the Rieske protein. The cofactor is heme b. Heme c is required as a cofactor. The protein is post-translationally processed into cytochrome b and c1. This occurs by processing between residues 434 and 435 without processing between cytochrome b and the N-terminal of the putative signal sequence domain.

The protein resides in the cell inner membrane. Its function is as follows. Component of the ubiquinol-cytochrome c reductase complex (complex III or cytochrome b-c1 complex), which is a respiratory chain that generates an electrochemical potential coupled to ATP synthesis. c1 functions as an electron donor to cytochrome c. The chain is Cytochrome b/c1 (fbcH) from Bradyrhizobium diazoefficiens (strain JCM 10833 / BCRC 13528 / IAM 13628 / NBRC 14792 / USDA 110).